The sequence spans 95 residues: Oxytetracycline polyketide synthase acyl carrier protein (95 aa).

A Carrier domain is found at 3–81 (LLTLSDLLTL…ALIEMTNASL (79 aa)). Ser-41 carries the O-(pantetheine 4'-phosphoryl)serine modification.

In terms of processing, 4'-phosphopantetheine is transferred from CoA to a specific serine of the apo-ACP-like protein.

It participates in antibiotic biosynthesis; oxytetracycline biosynthesis. In terms of biological role, acyl carrier protein. In Streptomyces rimosus, this protein is Oxytetracycline polyketide synthase acyl carrier protein.